The chain runs to 802 residues: Phenylalanine--tRNA ligase beta subunit (802 aa).

The region spanning 38 to 148 is the tRNA-binding domain; sequence SKNFERVIVG…SEVPVGTDIS (111 aa). One can recognise a B5 domain in the interval 403–478; sequence VIQKKIFVLK…RVFGYHNIPA (76 aa). Aspartate 456, aspartate 462, and aspartate 466 together coordinate Mg(2+). An FDX-ACB domain is found at 703-796; the sequence is SLYPRCSRDI…LQEKFNAILR (94 aa).

This sequence belongs to the phenylalanyl-tRNA synthetase beta subunit family. Type 1 subfamily. Tetramer of two alpha and two beta subunits. Mg(2+) serves as cofactor.

It is found in the cytoplasm. It catalyses the reaction tRNA(Phe) + L-phenylalanine + ATP = L-phenylalanyl-tRNA(Phe) + AMP + diphosphate + H(+). This chain is Phenylalanine--tRNA ligase beta subunit, found in Buchnera aphidicola subsp. Baizongia pistaciae (strain Bp).